The chain runs to 305 residues: GMP synthase [glutamine-hydrolyzing] subunit B (305 aa).

The 183-residue stretch at 2-184 (VNIEKFIDQA…LGLPAEIQHR (183 aa)) folds into the GMPS ATP-PPase domain. An ATP-binding site is contributed by 29–35 (SGGVDSS).

Heterodimer composed of a glutamine amidotransferase subunit (A) and a GMP-binding subunit (B).

It catalyses the reaction XMP + L-glutamine + ATP + H2O = GMP + L-glutamate + AMP + diphosphate + 2 H(+). It participates in purine metabolism; GMP biosynthesis; GMP from XMP (L-Gln route): step 1/1. Functionally, catalyzes the synthesis of GMP from XMP. The protein is GMP synthase [glutamine-hydrolyzing] subunit B of Methanoculleus marisnigri (strain ATCC 35101 / DSM 1498 / JR1).